An 856-amino-acid chain; its full sequence is Leucine--tRNA ligase (856 aa).

The short motif at 53-63 (PYPSGNLHMGH) is the 'HIGH' region element. The short motif at 622-626 (KMSKS) is the 'KMSKS' region element. Lys625 contributes to the ATP binding site.

It belongs to the class-I aminoacyl-tRNA synthetase family.

Its subcellular location is the cytoplasm. It catalyses the reaction tRNA(Leu) + L-leucine + ATP = L-leucyl-tRNA(Leu) + AMP + diphosphate. This Prochlorococcus marinus (strain AS9601) protein is Leucine--tRNA ligase.